Here is a 740-residue protein sequence, read N- to C-terminus: Polyribonucleotide nucleotidyltransferase (740 aa).

Residues Asp-492 and Asp-498 each coordinate Mg(2+). Residues 559-618 form the KH domain; sequence PMVQTLEIQKEKIRDVIGLGGKVIKELCKTFDVEIDISENGEVKVWGNVGENVKKAVQSI. One can recognise an S1 motif domain in the interval 628–696; sequence GDIFDGEVVK…HKNRVKLTLR (69 aa).

This sequence belongs to the polyribonucleotide nucleotidyltransferase family. It depends on Mg(2+) as a cofactor.

It is found in the cytoplasm. It catalyses the reaction RNA(n+1) + phosphate = RNA(n) + a ribonucleoside 5'-diphosphate. In terms of biological role, involved in mRNA degradation. Catalyzes the phosphorolysis of single-stranded polyribonucleotides processively in the 3'- to 5'-direction. The chain is Polyribonucleotide nucleotidyltransferase from Orientia tsutsugamushi (strain Boryong) (Rickettsia tsutsugamushi).